Reading from the N-terminus, the 81-residue chain is ATP synthase subunit c (81 aa).

Helical transmembrane passes span alanine 7–glycine 27 and leucine 57–alanine 77.

It belongs to the ATPase C chain family. F-type ATPases have 2 components, F(1) - the catalytic core - and F(0) - the membrane proton channel. F(1) has five subunits: alpha(3), beta(3), gamma(1), delta(1), epsilon(1). F(0) has four main subunits: a(1), b(1), b'(1) and c(10-14). The alpha and beta chains form an alternating ring which encloses part of the gamma chain. F(1) is attached to F(0) by a central stalk formed by the gamma and epsilon chains, while a peripheral stalk is formed by the delta, b and b' chains.

It localises to the cellular thylakoid membrane. In terms of biological role, f(1)F(0) ATP synthase produces ATP from ADP in the presence of a proton or sodium gradient. F-type ATPases consist of two structural domains, F(1) containing the extramembraneous catalytic core and F(0) containing the membrane proton channel, linked together by a central stalk and a peripheral stalk. During catalysis, ATP synthesis in the catalytic domain of F(1) is coupled via a rotary mechanism of the central stalk subunits to proton translocation. Functionally, key component of the F(0) channel; it plays a direct role in translocation across the membrane. A homomeric c-ring of between 10-14 subunits forms the central stalk rotor element with the F(1) delta and epsilon subunits. This chain is ATP synthase subunit c, found in Synechococcus sp. (strain JA-3-3Ab) (Cyanobacteria bacterium Yellowstone A-Prime).